The primary structure comprises 354 residues: MRVADFTFELPDSLIARHPLAERRSSRLLTLDGPTGALAHRQFTDLLEHLRPGDLMVFNNTRVIPARLFGQKASGGKLEILVERVLDSHRVLAHVRSSKSPKPGSSILIDGGGEAEMVARHDALFELRFAEEVLPLLERVGRMPLPPYIDRPDEGADRERYQTVYAQRAGAVAAPTAGLHFDQPLLEAIAAKGVETAFVTLHVGAGTFQPVRVEQIEDHHMHSEWLEVGQDVVDAVAACRARGGRVIAVGTTSVRSLESAARDGELKSFSGDTDIFIYPGRPFHVVDALVTNFHLPESTLLMLVSAFAGYPETMAAYAAAIEHGYRFFSYGDAMFITRNPAPTAPQESAPEDHA.

It belongs to the QueA family. As to quaternary structure, monomer.

The protein resides in the cytoplasm. The catalysed reaction is 7-aminomethyl-7-carbaguanosine(34) in tRNA + S-adenosyl-L-methionine = epoxyqueuosine(34) in tRNA + adenine + L-methionine + 2 H(+). It participates in tRNA modification; tRNA-queuosine biosynthesis. Its function is as follows. Transfers and isomerizes the ribose moiety from AdoMet to the 7-aminomethyl group of 7-deazaguanine (preQ1-tRNA) to give epoxyqueuosine (oQ-tRNA). The polypeptide is S-adenosylmethionine:tRNA ribosyltransferase-isomerase (Pseudomonas syringae pv. syringae (strain B728a)).